A 174-amino-acid chain; its full sequence is MVYKIKKYGEDVLKQIAKEVELSEINDEFRQFLDDMVETMYETDGVGLAAPQIGVSKRIFVCDDGNGVLRKVINPIIVPLTEETQEFEEGCLSVPGIYKKVERPKRVLLKYLNEYGKEVEEIAENFLAVVVQHENDHLDGILFIEKISPMAKRLIAKKLANIKKETKRIKEENE.

Residues Cys-91 and His-133 each coordinate Fe cation. The active site involves Glu-134. Position 137 (His-137) interacts with Fe cation.

The protein belongs to the polypeptide deformylase family. Fe(2+) is required as a cofactor.

It carries out the reaction N-terminal N-formyl-L-methionyl-[peptide] + H2O = N-terminal L-methionyl-[peptide] + formate. Removes the formyl group from the N-terminal Met of newly synthesized proteins. Requires at least a dipeptide for an efficient rate of reaction. N-terminal L-methionine is a prerequisite for activity but the enzyme has broad specificity at other positions. The protein is Peptide deformylase of Fusobacterium nucleatum subsp. nucleatum (strain ATCC 25586 / DSM 15643 / BCRC 10681 / CIP 101130 / JCM 8532 / KCTC 2640 / LMG 13131 / VPI 4355).